The following is a 613-amino-acid chain: Penicillin-binding protein activator LpoA (613 aa).

The N-terminal stretch at 1-29 (MNSMLNFTHKRKSVSRLLAPVALAVILAG) is a signal peptide. C30 is lipidated: N-palmitoyl cysteine. The S-diacylglycerol cysteine moiety is linked to residue C30.

The protein belongs to the LpoA family. In terms of assembly, interacts with PBP1a.

The protein localises to the cell outer membrane. Regulator of peptidoglycan synthesis that is essential for the function of penicillin-binding protein 1A (PBP1a). This is Penicillin-binding protein activator LpoA from Photobacterium profundum (strain SS9).